The chain runs to 229 residues: Putative N-acetylmannosamine-6-phosphate 2-epimerase (229 aa).

It belongs to the NanE family.

It catalyses the reaction an N-acyl-D-glucosamine 6-phosphate = an N-acyl-D-mannosamine 6-phosphate. It functions in the pathway amino-sugar metabolism; N-acetylneuraminate degradation; D-fructose 6-phosphate from N-acetylneuraminate: step 3/5. Functionally, converts N-acetylmannosamine-6-phosphate (ManNAc-6-P) to N-acetylglucosamine-6-phosphate (GlcNAc-6-P). The sequence is that of Putative N-acetylmannosamine-6-phosphate 2-epimerase from Escherichia coli O8 (strain IAI1).